The primary structure comprises 334 residues: Aspartate carbamoyltransferase catalytic subunit (334 aa).

Carbamoyl phosphate contacts are provided by Arg-71 and Thr-72. Lys-99 provides a ligand contact to L-aspartate. Residues Arg-121, His-151, and Gln-154 each coordinate carbamoyl phosphate. Positions 184 and 239 each coordinate L-aspartate. Carbamoyl phosphate is bound by residues Gly-280 and Pro-281.

Belongs to the aspartate/ornithine carbamoyltransferase superfamily. ATCase family. Heterododecamer (2C3:3R2) of six catalytic PyrB chains organized as two trimers (C3), and six regulatory PyrI chains organized as three dimers (R2).

It catalyses the reaction carbamoyl phosphate + L-aspartate = N-carbamoyl-L-aspartate + phosphate + H(+). Its pathway is pyrimidine metabolism; UMP biosynthesis via de novo pathway; (S)-dihydroorotate from bicarbonate: step 2/3. In terms of biological role, catalyzes the condensation of carbamoyl phosphate and aspartate to form carbamoyl aspartate and inorganic phosphate, the committed step in the de novo pyrimidine nucleotide biosynthesis pathway. In Pseudomonas savastanoi pv. phaseolicola (strain 1448A / Race 6) (Pseudomonas syringae pv. phaseolicola (strain 1448A / Race 6)), this protein is Aspartate carbamoyltransferase catalytic subunit.